The primary structure comprises 119 residues: MEKLFNRSDRIAQELQKKIAAIIQHSLKDPRIKTIITVSEVQVSKDLSYAQIFVSFLESDNNEKVKKKITLLNRASSYIRKLLCKRMKLRIVPNIIFHHDDSFLKGNKISCILENLTKK.

The protein belongs to the RbfA family. Monomer. Binds 30S ribosomal subunits, but not 50S ribosomal subunits or 70S ribosomes.

It localises to the cytoplasm. In terms of biological role, one of several proteins that assist in the late maturation steps of the functional core of the 30S ribosomal subunit. Associates with free 30S ribosomal subunits (but not with 30S subunits that are part of 70S ribosomes or polysomes). Required for efficient processing of 16S rRNA. May interact with the 5'-terminal helix region of 16S rRNA. This Buchnera aphidicola subsp. Acyrthosiphon pisum (strain Tuc7) protein is Ribosome-binding factor A.